The chain runs to 325 residues: Cytochrome f (325 aa).

A signal peptide spans 1-40 (MKTPELMAIWQRLKTACLVAIATFGLFFASDVLFPQAAAA). Y41, C62, C65, and H66 together coordinate heme. Residues 290–309 (IYGYMAFVAGIMLTQIFLVL) form a helical membrane-spanning segment.

This sequence belongs to the cytochrome f family. The 4 large subunits of the cytochrome b6-f complex are cytochrome b6, subunit IV (17 kDa polypeptide, PetD), cytochrome f and the Rieske protein, while the 4 small subunits are PetG, PetL, PetM and PetN. The complex functions as a dimer. The cofactor is heme.

It localises to the cellular thylakoid membrane. Functionally, component of the cytochrome b6-f complex, which mediates electron transfer between photosystem II (PSII) and photosystem I (PSI), cyclic electron flow around PSI, and state transitions. This is Cytochrome f (petA) from Picosynechococcus sp. (strain ATCC 27264 / PCC 7002 / PR-6) (Agmenellum quadruplicatum).